Consider the following 216-residue polypeptide: Acyl-homoserine-lactone synthase (216 aa).

Belongs to the autoinducer synthase family.

The catalysed reaction is a fatty acyl-[ACP] + S-adenosyl-L-methionine = an N-acyl-L-homoserine lactone + S-methyl-5'-thioadenosine + holo-[ACP] + H(+). Its function is as follows. Required for the synthesis of an acyl-HSL autoinducer that binds to YukR and which is involved in the regulation of motility and morphology. This is Acyl-homoserine-lactone synthase (yukI) from Yersinia ruckeri.